A 222-amino-acid chain; its full sequence is Large ribosomal subunit protein mL64 (222 aa).

Disordered regions lie at residues 19–46 (APGS…EDLL) and 188–222 (KRLK…APSS). The span at 25–36 (YRARPPPRRRPG) shows a compositional bias: basic residues. Residues 99–212 (MQESLRVKQL…AAALAAAVAQ (114 aa)) adopt a coiled-coil conformation. A Nuclear localization signal motif is present at residues 184 to 200 (KKERKRLKEEKQKRKKE). The segment covering 203 to 212 (AAALAAAVAQ) has biased composition (low complexity).

This sequence belongs to the mitochondrion-specific ribosomal protein mL64 family. In terms of assembly, component of the mitochondrial large ribosomal subunit (mt-LSU). Mature mammalian 55S mitochondrial ribosomes consist of a small (28S) and a large (39S) subunit. The 28S small subunit contains a 12S ribosomal RNA (12S mt-rRNA) and 30 different proteins. The 39S large subunit contains a 16S rRNA (16S mt-rRNA), a copy of mitochondrial valine transfer RNA (mt-tRNA(Val)), which plays an integral structural role, and 52 different proteins. Interacts with GADD45A, GADD45B and GADD45G. Interacts with NR4A1 via the NR4A1 AB domain. Interacts with ATAD3A and ATAD3B. (Microbial infection) Interacts with the human papilloma virus type 16 (HPV 16) minor capsid protein L2. In terms of tissue distribution, widely expressed. Highly expressed in the thyroid gland, heart, lymph nodes, trachea and adrenal tissues. Expressed at lower level in liver skeletal muscle, kidney, pancreas, testis, ovary and stomach. Barely detectable in adrenal adenoma and papillary thyroid cancer.

It localises to the mitochondrion. The protein resides in the nucleus. Its function is as follows. Acts as a negative regulator of G1 to S cell cycle phase progression by inhibiting cyclin-dependent kinases. Inhibitory effects are additive with GADD45 proteins but also occur in the absence of GADD45 proteins. Acts as a repressor of the orphan nuclear receptor NR4A1 by inhibiting AB domain-mediated transcriptional activity. May be involved in the hormone-mediated regulation of NR4A1 transcriptional activity. May play a role in mitochondrial protein synthesis. This Homo sapiens (Human) protein is Large ribosomal subunit protein mL64 (GADD45GIP1).